The following is a 1831-amino-acid chain: MSMRGSMRRSHLRQVSAASLDSVSSRSVDTAQHDALQLSDHPSSSDGKTYKFSSTGLDRRQCSLWVHDETFSKEEILFNQAAFADTGVRDGDLIEILSARTVVDGPSSGQSQSHSFNLAVKPDMRTRSMRDVHGHGHSHVETASSSRSHAMSKFKTPLQTRCLFIAKPLPNEIRTKHPKLELSVTSSVANIFGFKNRSTVYISIVEQTQCAASHVDISFRDQFLVRSDMWRLVMSELAGKIVYKGQKIVFMGSIKATVKNIFIRGKKVLSGFFSPQTIPVFRSESAKYVLFIQMSREMWDFDSEGTGDILFSRVINGFLPELFKRWANADARHLVTIVLFTRVEYDASITGLPSTLNSENLKNTSEPNHAPTRDFYRVVVNDMASGHWTTILDELKKDFRTFLRDVSILKVPEDPVASTSASTTPKATIGGRPSTALRGNILEAIHLASSHLAFDHIDRDMVHTGTSIIVITPGSGVFEVSYESLASTTEALTNRGIAIDLVCLSPMPLHSVPLFKYREPNRGGRSSFSYGGDIQGGGYSPEMRHPFASLTNRTHFSPKSTFSSTSPASGPRGPWTRANDWSYGIPHWLDISYWNPETYRESRRILKKDPNAPIPFTVTKKSKLFKSRVRMYEIQMGGVMESEQSNISIPYLLEDQITSRSLNVPPKTSFRRNSHFNHQLSDSLRPGSFLGNMTNPKETILSRSRSASATAAWMDNYDDNVFRSFSKRNHRRKQTKPKRPSEPEVQVSTTHDRLSARSITHLREHETKPNEWPRKEAAPKIPATKAVSPRKPALKAPSKTKVPRISRTISFALRGLGVAPPRAQASTEVNVEHATGLPSSNTKRSAGSLRESKSIESLSAASDSTSTATVVEASPMPSTPPRQRKSPTITPSRPISIRVPLKTPIEDSDQPTRSVAESFGTNGADLPITEKASLEHQTRKSIPRFELTTSPGLRESSAKNLQSRLLAPWVRSINPCNTPREVSRDTSWFGRWQHAYPRPPHVAVVKWKSLKSPAVLPLTTEEFPTASELASDYLQTPYRVFPNDDAEGIEAPKTTGLLMREMISLRLSHGFQIVVGNNVVEASGRYALRSPNVFDTQTLEMDGATVFLSKGHSIHRLVCTGGNEIEVTRFVHRSLSDLVSEKKNGLDIVYSLAMRTIMSREYDIKHINLRSSAEEYNWNYADNYIAGHRDYLFNPAQQLHFWRVRFVLIPVRLHVHARRHMQPINEDNEEEIHLLGINQLTLIWQRHKYVPPEEKRIETSSKSRDQNPLNILYQTRNPSEVVAAELNLLADPGLESSPAQLLPESELLERSSISLSSLAQIVQSDKGVRMMDRRWHWRLHYNCFIGSEFTTWLCQNFRDIETREEAVEFGNKLLELNLFQHVEQRHKFRDGNYFYQISSEYRVARPESRNSWFPQIRPDKSIPSTPATADNWKDSPLSAHSRSASVDQNAPQTPTTPSRSKSKASVMLSKTLKYDVDPRKRSNRPEVIDLHYDRLHNPDNCFHIELSWMNTTPKLIEDTVQSWAATAEKFGLKLVQVPIAEASAIDQTQPFRQPYRVKLKVPPPKGPSSTIFNAASFSQQDAPDPHYFQKLILKKFDFVLDFEARSAFPPDVEVGYSWGRPDYRYSQYIHQSGTLLVQITDEGDFLVLANRLVSTRTVPFTGTRDRDHRARAGYDPMGTIERDRLSPRLSPLVRPIHDIAGPASPMAHSSLDSASLYRAPEHVLHGFEEFCNDPVRLGQLYSESFVYPVSAKAAPTTASCVDSSIPSLELPAPVIGHHISPPPGTPVRPETRTRAASTSANGSLPLIDPRSRQREESSVARGSPRSASIML.

4 disordered regions span residues Ala-31–Phe-52, Arg-130–Ala-150, Ser-724–Lys-801, and Pro-820–Ala-924. A compositionally biased stretch (polar residues) spans Asp-40 to Phe-52. Basic and acidic residues predominate over residues Arg-130–Val-140. The span at Phe-725–Lys-738 shows a compositional bias: basic residues. Basic and acidic residues predominate over residues Thr-750–Ala-778. Low complexity predominate over residues Ile-855 to Ser-874. Residues Pro-911 to Thr-921 show a composition bias toward polar residues. The 76-residue stretch at Ser-1324–Ser-1399 folds into the DEP domain. Disordered stretches follow at residues Trp-1412–Met-1467 and Ala-1772–Leu-1831. Positions Ser-1438–Arg-1459 are enriched in polar residues. The span at Pro-1809–Ser-1818 shows a compositional bias: basic and acidic residues.

The protein belongs to the IML1 family.

The protein resides in the vacuole membrane. This Emericella nidulans (strain FGSC A4 / ATCC 38163 / CBS 112.46 / NRRL 194 / M139) (Aspergillus nidulans) protein is Vacuolar membrane-associated protein iml1 (iml1).